The following is a 208-amino-acid chain: Uracil phosphoribosyltransferase (208 aa).

5-phospho-alpha-D-ribose 1-diphosphate contacts are provided by residues R78, R103, and 130–138; that span reads DPMLATGGS. Residues I193 and 198–200 each bind uracil; that span reads GDA. D199 is a binding site for 5-phospho-alpha-D-ribose 1-diphosphate.

Belongs to the UPRTase family. Mg(2+) serves as cofactor.

It catalyses the reaction UMP + diphosphate = 5-phospho-alpha-D-ribose 1-diphosphate + uracil. The protein operates within pyrimidine metabolism; UMP biosynthesis via salvage pathway; UMP from uracil: step 1/1. Allosterically activated by GTP. Catalyzes the conversion of uracil and 5-phospho-alpha-D-ribose 1-diphosphate (PRPP) to UMP and diphosphate. This is Uracil phosphoribosyltransferase from Shewanella frigidimarina (strain NCIMB 400).